A 126-amino-acid polypeptide reads, in one-letter code: Probable DNA-directed RNA polymerase II subunit RPB11 (126 aa).

The protein belongs to the archaeal Rpo11/eukaryotic RPB11/RPC19 RNA polymerase subunit family. As to quaternary structure, component of the RNA polymerase II (Pol II) complex consisting of 12 subunits.

It is found in the nucleus. In terms of biological role, DNA-dependent RNA polymerase catalyzes the transcription of DNA into RNA using the four ribonucleoside triphosphates as substrates. Component of RNA polymerase II which synthesizes mRNA precursors and many functional non-coding RNAs. Pol II is the central component of the basal RNA polymerase II transcription machinery. It is composed of mobile elements that move relative to each other. RPB11 is part of the core element with the central large cleft. This Plasmodium falciparum (isolate 3D7) protein is Probable DNA-directed RNA polymerase II subunit RPB11.